The sequence spans 548 residues: LDL receptor repeat-containing protein egg-2 (548 aa).

The Cytoplasmic portion of the chain corresponds to 1–49 (MSQQAGNAQRGRFDEEPMSLGEKISHRMDQLKEIVSSSCPCAGKFPPVA). The chain crosses the membrane as a helical; Signal-anchor for type II membrane protein span at residues 50–70 (IVLIVALIILGVIIAVPLVIF). Over 71–548 (LSPSAQAMSS…LALKNSGLRP (478 aa)) the chain is Extracellular. N-linked (GlcNAc...) asparagine glycosylation occurs at Asn-119. 8 consecutive LDL-receptor class A domains span residues 122 to 160 (TCSGFGFACTGSIDMIIPSSKRCDGLKDCSDGSDEENCK), 161 to 213 (ECQS…ASCR), 215 to 252 (KCSKDQFKCSGSDACLPISVKCDGVSDCENESDESNCN), 253 to 288 (KCQKGAHKCGKNCIKASKVCDGIPDCDDGSDEHQCD), 291 to 328 (TCSGSEKALCEDGTCIMRSQVCDGKHDCLDGIDEENCP), 370 to 412 (KCDP…KKCT), 416 to 454 (ECVVESSIQFTCDNKCLESSRRCDGVWDCEDKSDEKGCD), and 455 to 492 (KCPSRSFKCSADKKCLPFHTRCNGVAECSDGSDEHKCS). 23 disulfide bridges follow: Cys-130/Cys-150, Cys-144/Cys-159, Cys-162/Cys-190, Cys-168/Cys-203, Cys-197/Cys-212, Cys-216/Cys-229, Cys-223/Cys-242, Cys-236/Cys-251, Cys-254/Cys-265, Cys-261/Cys-278, Cys-272/Cys-287, Cys-292/Cys-305, Cys-300/Cys-318, Cys-312/Cys-327, Cys-371/Cys-389, Cys-379/Cys-402, Cys-396/Cys-411, Cys-417/Cys-431, Cys-427/Cys-444, Cys-438/Cys-453, Cys-456/Cys-469, Cys-463/Cys-482, and Cys-476/Cys-491. Asn-244 is a glycosylation site (N-linked (GlcNAc...) asparagine). Asn-527 is a glycosylation site (N-linked (GlcNAc...) asparagine).

Its subcellular location is the cell membrane. It localises to the endosome membrane. Probable receptor which is required for the oocyte-to-zygote transition although its exact function is controversial. Redundantly with egg-1, seems to be required for fertilization probably by promoting the interaction or fusion between sperm and oocyte. Conversely, shown to be dispensable for fertilization but required together with egg-1 for the formation of a continuous and cohesive eggshell chitin layer by maintaining a homogenous distribution of chitin synthase chs-1 at the unfertilized oocyte cell membrane. Appears to recruit or maintain together to the unfertilized oocyte cortex several proteins including chs-1, kinase mbk-2 and pseudophosphatase egg-3, and possibly egg-4 and egg-5. The polypeptide is LDL receptor repeat-containing protein egg-2 (Caenorhabditis elegans).